Reading from the N-terminus, the 444-residue chain is ATP-dependent protease ATPase subunit HslU (444 aa).

Residues Ile-18, 60–65, Asp-256, Glu-322, and Arg-394 contribute to the ATP site; that span reads GVGKTE.

This sequence belongs to the ClpX chaperone family. HslU subfamily. A double ring-shaped homohexamer of HslV is capped on each side by a ring-shaped HslU homohexamer. The assembly of the HslU/HslV complex is dependent on binding of ATP.

It is found in the cytoplasm. Its function is as follows. ATPase subunit of a proteasome-like degradation complex; this subunit has chaperone activity. The binding of ATP and its subsequent hydrolysis by HslU are essential for unfolding of protein substrates subsequently hydrolyzed by HslV. HslU recognizes the N-terminal part of its protein substrates and unfolds these before they are guided to HslV for hydrolysis. In Serratia proteamaculans (strain 568), this protein is ATP-dependent protease ATPase subunit HslU.